The chain runs to 83 residues: Mitotic-spindle organizing protein 1 (83 aa).

This sequence belongs to the MOZART1 family. In terms of assembly, part of the gamma-tubulin complex.

It is found in the cytoplasm. The protein resides in the cytoskeleton. It localises to the microtubule organizing center. The protein localises to the spindle pole body. Required for gamma-tubulin complex recruitment to the microtubule organizing center (MTOC). This is Mitotic-spindle organizing protein 1 from Botryotinia fuckeliana (strain B05.10) (Noble rot fungus).